The primary structure comprises 330 residues: Protein RfbI (330 aa).

The 87-residue stretch at histidine 3–leucine 89 folds into the 2Fe-2S ferredoxin-type domain. Positions 37, 42, and 45 each coordinate [2Fe-2S] cluster. The FAD-binding FR-type domain occupies lysine 94–arginine 192.

The cofactor is [2Fe-2S] cluster.

It functions in the pathway bacterial outer membrane biogenesis; LPS O-antigen biosynthesis. The polypeptide is Protein RfbI (rfbI) (Salmonella typhimurium (strain LT2 / SGSC1412 / ATCC 700720)).